Consider the following 101-residue polypeptide: NADH-quinone oxidoreductase subunit K (101 aa).

A run of 3 helical transmembrane segments spans residues 4–24, 29–49, and 65–85; these read LSHY…GIFI, IIVI…NLVA, and FVLT…VVFF.

This sequence belongs to the complex I subunit 4L family. NDH-1 is composed of 14 different subunits. Subunits NuoA, H, J, K, L, M, N constitute the membrane sector of the complex.

It is found in the cell inner membrane. It catalyses the reaction a quinone + NADH + 5 H(+)(in) = a quinol + NAD(+) + 4 H(+)(out). In terms of biological role, NDH-1 shuttles electrons from NADH, via FMN and iron-sulfur (Fe-S) centers, to quinones in the respiratory chain. The immediate electron acceptor for the enzyme in this species is believed to be ubiquinone. Couples the redox reaction to proton translocation (for every two electrons transferred, four hydrogen ions are translocated across the cytoplasmic membrane), and thus conserves the redox energy in a proton gradient. This is NADH-quinone oxidoreductase subunit K from Methylobacterium nodulans (strain LMG 21967 / CNCM I-2342 / ORS 2060).